Here is an 82-residue protein sequence, read N- to C-terminus: MYPLAFAKEGEEVIVKKIDAGCGAMQRLVSMGINIGSKLKVIRNQNGPVIISTKGSNIAIGRGLAMKIMVEDAEYGGENEKL.

Belongs to the FeoA family.

Might be involved in Fe(2+) ion uptake. This Methanocaldococcus jannaschii (strain ATCC 43067 / DSM 2661 / JAL-1 / JCM 10045 / NBRC 100440) (Methanococcus jannaschii) protein is Putative Fe(2+) transport protein A.